A 418-amino-acid polypeptide reads, in one-letter code: Thyroid hormone receptor alpha-B (418 aa).

The tract at residues 1–40 (MDQNLSGLDCLSEPDEKRWPDGKRKRKNSQCMGKSGMSGD) is disordered. The modulating stretch occupies residues 1 to 60 (MDQNLSGLDCLSEPDEKRWPDGKRKRKNSQCMGKSGMSGDSLVSLPPAGYIPSYLDKDEP). NR C4-type zinc fingers lie at residues 61–81 (CVVCSDKATGYHYRCITCEGC) and 99–123 (CKYDGCCIIDKITRNQCQLCRFKKC). The nuclear receptor DNA-binding region spans 61 to 128 (CVVCSDKATG…RFKKCIAVGM (68 aa)). An NR LBD domain is found at 171–415 (EEWELIRIVT…PPLFLEVFED (245 aa)).

Belongs to the nuclear hormone receptor family. NR1 subfamily. As to quaternary structure, binds to thyroid hormone receptor element (TRE) weakly as homodimers and monomers, but binds TRE with much higher affinity as heterodimers with retinoid X receptors. Can bind DNA as a heterodimer with either rxra or rxrg.

Its subcellular location is the nucleus. Its function is as follows. High affinity receptor for triiodothyronine (T3). This Xenopus laevis (African clawed frog) protein is Thyroid hormone receptor alpha-B (thra-b).